A 91-amino-acid polypeptide reads, in one-letter code: DNA-binding protein HRL18 (91 aa).

This sequence belongs to the bacterial histone-like protein family.

Histone-like DNA-binding protein which is capable of wrapping DNA to stabilize it, and thus to prevent its denaturation under extreme environmental conditions. In Rhizobium leguminosarum, this protein is DNA-binding protein HRL18.